A 603-amino-acid chain; its full sequence is MASASASKYNSHSLENESIKKVSQDGVSQDVSETVPRLPGELLITEKEVIYICPFNGPIKGRVYITNYRLYLRSLETDSALILDVPLGVISRIEKMGGATSRGENSYGLDITCKDLRNLRFALKQEGHSRRDMFEILVKHAFPLAHNLPLFAFVNEEKFNVDGWTVYNPVEEYRRQGLPNHHWRISFINKCYELCETYPALLVVPYRTSDDDLRRIATFRSRNRLPVLSWIHPENKMVIMRCSQPLVGMSGKRNKDDEKYLDVIRETNKQTSKLMIYDARPSVNAVANKATGGGYESDDAYQNSELSFLDIHNIHVMRESLKKVKDIVYPNIEESHWLSSLESTHWLEHIKLVLTGAIQVADQVSSGKSSVLVHCSDGWDRTAQLTSLAMLMLDSFYRTIEGFEILVQKEWISFGHKFASRIGHGDKNHADADRSPIFLQFIDCVWQMSKQFPTAFEFNEGFLITVLDHLYSCRFGTFLFNCDSARERQKLTERTVSLWSLINSNKDKFKNPFYTKEINRVLYPVASMRHLELWVNYYIRWNPRVKQQQPNPVEQRYMELLALRDDYIKRLEELQLANSAKLADAPASTSSSSQMVPHVQTHF.

Residues serine 13 and serine 18 each carry the phosphoserine modification. The region spanning 29 to 97 (QDVSETVPRL…GVISRIEKMG (69 aa)) is the GRAM domain. The Myotubularin phosphatase domain maps to 163–538 (GWTVYNPVEE…RHLELWVNYY (376 aa)). A 1,2-diacyl-sn-glycero-3-phospho-(1D-myo-inositol-3,5-bisphosphate) is bound by residues asparagine 288, asparagine 313, and isoleucine 314. Residues asparagine 288, asparagine 313, and isoleucine 314 each contribute to the a 1,2-diacyl-sn-glycero-3-phospho-(1D-myo-inositol-3-phosphate) site. The Phosphocysteine intermediate role is filled by cysteine 375. Residues serine 376, aspartate 377, glycine 378, tryptophan 379, aspartate 380, arginine 381, lysine 417, and arginine 421 each contribute to the a 1,2-diacyl-sn-glycero-3-phospho-(1D-myo-inositol-3,5-bisphosphate) site. 6 residues coordinate a 1,2-diacyl-sn-glycero-3-phospho-(1D-myo-inositol-3-phosphate): serine 376, aspartate 377, glycine 378, tryptophan 379, aspartate 380, and arginine 381. Arginine 421 is a binding site for a 1,2-diacyl-sn-glycero-3-phospho-(1D-myo-inositol-3-phosphate). Threonine 495 carries the post-translational modification Phosphothreonine. Position 588 is a phosphoserine (serine 588).

Belongs to the protein-tyrosine phosphatase family. Non-receptor class myotubularin subfamily. Heterodimer with MTMR12. Interacts with KMT2A/MLL1 (via SET domain). Interacts with DES in skeletal muscle but not in cardiac muscle. Interacts with SPEG. As to expression, widely expressed with highest levels detected in heart and muscle and low levels in brain (at protein level). Expressed in skeletal muscles (at protein level).

The protein localises to the cytoplasm. It localises to the cell membrane. It is found in the cell projection. The protein resides in the filopodium. Its subcellular location is the ruffle. The protein localises to the late endosome. It localises to the myofibril. It is found in the sarcomere. It catalyses the reaction a 1,2-diacyl-sn-glycero-3-phospho-(1D-myo-inositol-3-phosphate) + H2O = a 1,2-diacyl-sn-glycero-3-phospho-(1D-myo-inositol) + phosphate. It carries out the reaction a 1,2-diacyl-sn-glycero-3-phospho-(1D-myo-inositol-3,5-bisphosphate) + H2O = a 1,2-diacyl-sn-glycero-3-phospho-(1D-myo-inositol-5-phosphate) + phosphate. The catalysed reaction is 1,2-dioctanoyl-sn-glycero-3-phospho-(1-D-myo-inositol-3-phosphate) + H2O = 1,2-dioctanoyl-sn-glycero-3-phospho-(1D-myo-inositol) + phosphate. The enzyme catalyses 1,2-dioctanoyl-sn-glycero-3-phospho-(1D-myo-inositol-3,5-bisphosphate) + H2O = 1,2-dioctanoyl-sn-glycero-3-phospho-(1D-myo-inositol-5-phosphate) + phosphate. It catalyses the reaction 1,2-dihexadecanoyl-sn-glycero-3-phospho-(1D-myo-inositol-3,5-phosphate) + H2O = 1,2-dihexadecanoyl-sn-glycero-3-phospho-(1D-myo-inositol-5-phosphate) + phosphate. Its activity is regulated as follows. Allosterically activated by phosphatidylinositol 5-phosphate (PI5P). Functionally, lipid phosphatase which dephosphorylates phosphatidylinositol 3-monophosphate (PI3P) and phosphatidylinositol 3,5-bisphosphate (PI(3,5)P2). Has also been shown to dephosphorylate phosphotyrosine- and phosphoserine-containing peptides. Negatively regulates EGFR degradation through regulation of EGFR trafficking from the late endosome to the lysosome. Plays a role in vacuolar formation and morphology. Regulates desmin intermediate filament assembly and architecture. Plays a role in mitochondrial morphology and positioning. Required for skeletal muscle maintenance but not for myogenesis. In skeletal muscles, stabilizes MTMR12 protein levels. This Mus musculus (Mouse) protein is Myotubularin.